Consider the following 192-residue polypeptide: Probable cobalt-precorrin-6B C(15)-methyltransferase (decarboxylating) (192 aa).

S-adenosyl-L-methionine is bound by residues T17, G41–G45, D62, and A91.

Belongs to the methyltransferase superfamily. Archaeal-type CbiT family. Homotetramer.

The catalysed reaction is Co-precorrin-6B + S-adenosyl-L-methionine = Co-precorrin-7 + S-adenosyl-L-homocysteine + CO2. Its pathway is cofactor biosynthesis; adenosylcobalamin biosynthesis; cob(II)yrinate a,c-diamide from sirohydrochlorin (anaerobic route): step 8/10. Catalyzes the methylation of C-15 in cobalt-precorrin-6B followed by the decarboxylation of C-12 to form cobalt-precorrin-7. The chain is Probable cobalt-precorrin-6B C(15)-methyltransferase (decarboxylating) from Methanothermobacter thermautotrophicus (strain ATCC 29096 / DSM 1053 / JCM 10044 / NBRC 100330 / Delta H) (Methanobacterium thermoautotrophicum).